A 413-amino-acid chain; its full sequence is Putative competence-damage inducible protein (413 aa).

This sequence belongs to the CinA family.

The chain is Putative competence-damage inducible protein from Lacticaseibacillus paracasei (strain ATCC 334 / BCRC 17002 / CCUG 31169 / CIP 107868 / KCTC 3260 / NRRL B-441) (Lactobacillus paracasei).